Consider the following 197-residue polypeptide: Putative peptidyl-prolyl cis-trans isomerase (197 aa).

The region spanning 14-195 (GEIKVVMHTN…HDVVIESIDV (182 aa)) is the PPIase cyclophilin-type domain.

Belongs to the cyclophilin-type PPIase family.

The enzyme catalyses [protein]-peptidylproline (omega=180) = [protein]-peptidylproline (omega=0). PPIases accelerate the folding of proteins. It catalyzes the cis-trans isomerization of proline imidic peptide bonds in oligopeptides. This Staphylococcus aureus (strain bovine RF122 / ET3-1) protein is Putative peptidyl-prolyl cis-trans isomerase.